We begin with the raw amino-acid sequence, 122 residues long: Putative ankyrin repeat protein L22 (122 aa).

ANK repeat units follow at residues 3–32 (DNNYAVRLASRNGYIEVVKYLVSIGADIKA), 33–62 (DDDYAVKWASRYGHLRVVKFLVSQGADIRV), 63–92 (NNDYAVQLASENGHFDVVKYLVSQDANIRA), and 94–122 (DDYAVKLASVNGHVEVVKYLVSQGAVLNQ).

The polypeptide is Putative ankyrin repeat protein L22 (Acanthamoeba polyphaga (Amoeba)).